Reading from the N-terminus, the 290-residue chain is UPF0761 membrane protein YihY (290 aa).

A run of 6 helical transmembrane segments spans residues 44-64 (LLSLVPLVAVVFALFAAFPMF), 104-124 (VGACGLIVTALLLMYSIDSAL), 140-160 (FAVYWMILTLGPLLAGASLAI), 183-203 (IFPLLLSWISFWLLYSIVPTI), 210-230 (AIVGAFVAALLFEAGKKGFAL), and 244-264 (VLAVIPILFVWVYWTWCIVLL).

Belongs to the UPF0761 family.

Its subcellular location is the cell inner membrane. The chain is UPF0761 membrane protein YihY from Shigella boydii serotype 4 (strain Sb227).